Here is a 418-residue protein sequence, read N- to C-terminus: MSTIKPSPSNNNLKVRSRPRRKSSIGKIDLGDTVPSLGTMFETKESKTAAKRRMQRLSEATKNDSDLVKKIWFSFREISYRHAWIAPLMILIAVYSAYFTSGNTTKTNVLHRFVAVSYQIGDTNAYGKGINDLCFVFYYMIFFTFLREFLMDVVIRPFAIRLHVTSKHRIKRIMEQMYAIFYTGVSGPFGIYCMYHSDLWFFNTKAMYRTYPDFTNPFLFKVFYLGQAAFWAQQACILVLQLEKPRKDHNELTFHHIVTLLLIWSSYVFHFTKMGLPIYITMDVSDFLLSFSKTLNYLDSGLAFFSFAIFVVAWIYLRHYINLKILWSVLTQFRTEGNYVLNFATQQYKCWISLPIVFVLIGALQLVNLYWLFLIFRVLYRILWRGILKDDRSDSESDEESDESSTTPTDSTPTKKDI.

The segment covering 1–14 has biased composition (polar residues); the sequence is MSTIKPSPSNNNLK. The tract at residues 1–25 is disordered; it reads MSTIKPSPSNNNLKVRSRPRRKSSI. Residue Ser-2 is modified to N-acetylserine. At 2 to 81 the chain is on the cytoplasmic side; that stretch reads STIKPSPSNN…WFSFREISYR (80 aa). Residues 15–24 are compositionally biased toward basic residues; it reads VRSRPRRKSS. A phosphoserine mark is found at Ser-23 and Ser-24. Residues 82 to 102 traverse the membrane as a helical segment; sequence HAWIAPLMILIAVYSAYFTSG. N-linked (GlcNAc...) asparagine glycosylation occurs at Asn-103. Topologically, residues 103–130 are lumenal; it reads NTTKTNVLHRFVAVSYQIGDTNAYGKGI. A helical transmembrane segment spans residues 131-155; sequence NDLCFVFYYMIFFTFLREFLMDVVI. The Cytoplasmic portion of the chain corresponds to 156–172; that stretch reads RPFAIRLHVTSKHRIKR. One can recognise a TLC domain in the interval 168 to 385; it reads HRIKRIMEQM…FRVLYRILWR (218 aa). Positions 169, 172, and 182 each coordinate fumonisin B1. The helical transmembrane segment at 173 to 194 threads the bilayer; it reads IMEQMYAIFYTGVSGPFGIYCM. At 195–217 the chain is on the lumenal side; that stretch reads YHSDLWFFNTKAMYRTYPDFTNP. The chain crosses the membrane as a helical span at residues 218–240; that stretch reads FLFKVFYLGQAAFWAQQACILVL. 2 residues coordinate hexacosanoate: Tyr-224 and Trp-231. Trp-231 contributes to the fumonisin B1 binding site. Trp-231 is a binding site for hexacosanoyl-CoA. The Cytoplasmic portion of the chain corresponds to 241–249; it reads QLEKPRKDH. A helical membrane pass occupies residues 250-268; sequence NELTFHHIVTLLLIWSSYV. Position 255 (His-255) interacts with fumonisin B1. His-255, Thr-259, Leu-262, Ile-263, Ser-265, Ser-266, Phe-269, Phe-271, Met-274, Gly-275, Ile-278, Tyr-279, Met-282, Asp-283, and Asp-286 together coordinate hexacosanoate. Positions 255, 259, and 262 each coordinate hexacosanoyl-CoA. Residues Ser-265 and Ser-266 each contribute to the hexacosanoyl-CoA site. At 269–273 the chain is on the lumenal side; the sequence is FHFTK. 6 residues coordinate hexacosanoyl-CoA: Phe-271, Met-274, Gly-275, Ile-278, Tyr-279, and Met-282. Residues 274 to 295 form a helical membrane-spanning segment; that stretch reads MGLPIYITMDVSDFLLSFSKTL. Asp-286, Leu-289, Lys-293, Asn-296, Tyr-297, Ala-303, Phe-304, Phe-307, and Trp-314 together coordinate fumonisin B1. Residues Asp-286, Leu-289, Lys-293, and Asn-296 each coordinate hexacosanoyl-CoA. At 296–305 the chain is on the cytoplasmic side; sequence NYLDSGLAFF. Residues 306 to 334 form a helical membrane-spanning segment; sequence SFAIFVVAWIYLRHYINLKILWSVLTQFR. Hexacosanoyl-CoA is bound at residue Phe-307. Residues Arg-318, Phe-343, Tyr-348, Ile-352, Ser-353, Ile-356, Val-357, Leu-360, Ile-361, and Trp-371 each coordinate hexacosanoate. Arg-318 provides a ligand contact to hexacosanoyl-CoA. At 335 to 353 the chain is on the lumenal side; it reads TEGNYVLNFATQQYKCWIS. Hexacosanoyl-CoA is bound by residues Tyr-348, Ile-352, Ser-353, Ile-356, Val-357, and Leu-360. Residues 354–382 form a helical membrane-spanning segment; the sequence is LPIVFVLIGALQLVNLYWLFLIFRVLYRI. 5 residues coordinate fumonisin B1: Trp-371, Ile-375, Val-378, Ile-382, and Arg-385. A hexacosanoyl-CoA-binding site is contributed by Trp-371. The Cytoplasmic segment spans residues 383–418; sequence LWRGILKDDRSDSESDEESDESSTTPTDSTPTKKDI. Residues 390 to 418 are disordered; that stretch reads DDRSDSESDEESDESSTTPTDSTPTKKDI.

It belongs to the sphingosine N-acyltransferase family. In terms of assembly, component of the ceramide synthase complex composed of at least LAC1, LAG1 and LIP1. Forms a heterotetrameric complex, where one unit of the LIP1 homodimer interacts with LAC1 and the other with either LAC1 or LAG1. Phosphorylated; phosphorylation is induced upon disruption of sphingolipid synthesis. Phosphorylation is inhibited by exogenous addition of phytosphingosine.

The protein localises to the endoplasmic reticulum membrane. It catalyses the reaction a very long-chain fatty acyl-CoA + a sphingoid base = an N-(very-long-chain fatty acyl)-sphingoid base + CoA + H(+). It carries out the reaction hexacosanoyl-CoA + sphinganine = N-hexacosanoylsphinganine + CoA + H(+). The catalysed reaction is eicosanoyl-CoA + sphinganine = N-eicosanoylsphinganine + CoA + H(+). The enzyme catalyses a fatty acyl-CoA + sphinganine = an N-acylsphinganine + CoA + H(+). It catalyses the reaction (4R)-hydroxysphinganine + a fatty acyl-CoA = an N-acyl-(4R)-4-hydroxysphinganine + CoA + H(+). The protein operates within lipid metabolism; sphingolipid metabolism. Its activity is regulated as follows. As part of the ceramide synthase complex, inhibited by the sphinganine analog mycotoxin, fumonisin B1 (FB1). Activated by ACB1, as part of the ceramide synthase complex. Functionally, component of the ceramide synthase complex that catalyzes the transfer of the acyl chain from acyl-CoA to a sphingoid base, with high selectivity toward hexacosanoyl-CoA (C26:0-CoA). N-acylates sphinganine and phytosphingosine bases to form dihydroceramides and phytoceramides, respectively. Redundant with LAG1. Facilitates ER-to-Golgi transport of GPI-anchored proteins. Has a lower affinity for phytosphingosine (PHS) than dihydrosphingosine (DHS); PHS is required for the synthesis of phytoceramides and the formation of nuclear envelopes. Along with LAG1, plays a role in pheromone-induced MAP kinase-activation of mating and formation of diploid cells. May also play a role, together with LAG1, in the polarized membrane distribution of phosphatidylinositol 4,5 biphosphate required for STE5 localization to the plasma membrane. In Saccharomyces cerevisiae (strain ATCC 204508 / S288c) (Baker's yeast), this protein is Ceramide synthase LAC1 (LAC1).